An 86-amino-acid polypeptide reads, in one-letter code: uncharacterized protein (86 aa).

Transmembrane regions (helical) follow at residues 21–43 (VFWV…EATA) and 53–75 (FWYA…YFYF).

Its subcellular location is the cell membrane. This is an uncharacterized protein from Archaeoglobus fulgidus (strain ATCC 49558 / DSM 4304 / JCM 9628 / NBRC 100126 / VC-16).